Consider the following 874-residue polypeptide: GRB2-associated and regulator of MAPK protein 2 (874 aa).

The interval arginine 12–arginine 339 is CABIT. Positions glycine 188–alanine 206 are enriched in gly residues. Disordered regions lie at residues glycine 188–arginine 207, proline 388–alanine 422, glycine 437–proline 545, glycine 563–leucine 598, and alanine 625–alanine 742. 2 stretches are compositionally biased toward low complexity: residues proline 388 to glycine 403 and serine 518 to proline 545. The segment covering proline 575–arginine 585 has biased composition (polar residues). Composition is skewed to low complexity over residues proline 632 to proline 650 and alanine 658 to serine 691. Position 735 is a phosphoserine (serine 735). The SAM domain occupies serine 807–arginine 871.

This sequence belongs to the GAREM family.

Probable adapter protein that may provide a link between cell surface epidermal growth factor receptor and the MAPK/ERK signaling pathway. This chain is GRB2-associated and regulator of MAPK protein 2 (GAREM2), found in Homo sapiens (Human).